Consider the following 192-residue polypeptide: Imidazoleglycerol-phosphate dehydratase (192 aa).

Belongs to the imidazoleglycerol-phosphate dehydratase family.

It localises to the cytoplasm. The enzyme catalyses D-erythro-1-(imidazol-4-yl)glycerol 3-phosphate = 3-(imidazol-4-yl)-2-oxopropyl phosphate + H2O. The protein operates within amino-acid biosynthesis; L-histidine biosynthesis; L-histidine from 5-phospho-alpha-D-ribose 1-diphosphate: step 6/9. This is Imidazoleglycerol-phosphate dehydratase from Staphylococcus epidermidis (strain ATCC 12228 / FDA PCI 1200).